A 327-amino-acid chain; its full sequence is Biotin synthase (327 aa).

The region spanning 42 to 268 (NKVQKASLLS…VMPASTVRLS (227 aa)) is the Radical SAM core domain. Cys57, Cys61, and Cys64 together coordinate [4Fe-4S] cluster. Residues Cys102, Cys134, Cys194, and Arg266 each coordinate [2Fe-2S] cluster.

It belongs to the radical SAM superfamily. Biotin synthase family. Homodimer. [4Fe-4S] cluster is required as a cofactor. It depends on [2Fe-2S] cluster as a cofactor.

The catalysed reaction is (4R,5S)-dethiobiotin + (sulfur carrier)-SH + 2 reduced [2Fe-2S]-[ferredoxin] + 2 S-adenosyl-L-methionine = (sulfur carrier)-H + biotin + 2 5'-deoxyadenosine + 2 L-methionine + 2 oxidized [2Fe-2S]-[ferredoxin]. Its pathway is cofactor biosynthesis; biotin biosynthesis; biotin from 7,8-diaminononanoate: step 2/2. Its function is as follows. Catalyzes the conversion of dethiobiotin (DTB) to biotin by the insertion of a sulfur atom into dethiobiotin via a radical-based mechanism. The polypeptide is Biotin synthase (Rhizobium rhizogenes (strain K84 / ATCC BAA-868) (Agrobacterium radiobacter)).